Here is a 330-residue protein sequence, read N- to C-terminus: Protein IN CHLOROPLAST ATPASE BIOGENESIS, chloroplastic (330 aa).

Residues 1 to 35 (MGSISMHITPSTALPIRHFRARVSCCSSGHVSFIK) constitute a chloroplast transit peptide.

In terms of assembly, interacts with ATPC1.

The protein resides in the plastid. It localises to the chloroplast stroma. Involved in the assembly of the F(1) ATP synthase in chloroplast thylakoid membranes. Functions downstream of the CPN60 chaperones to promote assembly of the catalytically active core of the chloroplast ATP synthase. Assists the assembly of the ATP synthase gamma subunit into the active F(1) core downstream of CPN60-mediated folding, which is critical for the biogenesis of the chloroplast ATP synthase. This is Protein IN CHLOROPLAST ATPASE BIOGENESIS, chloroplastic from Arabidopsis thaliana (Mouse-ear cress).